Here is a 107-residue protein sequence, read N- to C-terminus: MSLTEKFDSVTVATKANVYFDGKCVSHGIVLADGTKKSVGVILPATLTFNTGAPEIMEGVAGSCRVRLKGESEWTVYGAGESFNVPANSSFDIEVAGEPYHYVCHFG.

The protein belongs to the nucleoside phosphorylase PpnP family.

It carries out the reaction a purine D-ribonucleoside + phosphate = a purine nucleobase + alpha-D-ribose 1-phosphate. It catalyses the reaction adenosine + phosphate = alpha-D-ribose 1-phosphate + adenine. The catalysed reaction is cytidine + phosphate = cytosine + alpha-D-ribose 1-phosphate. The enzyme catalyses guanosine + phosphate = alpha-D-ribose 1-phosphate + guanine. It carries out the reaction inosine + phosphate = alpha-D-ribose 1-phosphate + hypoxanthine. It catalyses the reaction thymidine + phosphate = 2-deoxy-alpha-D-ribose 1-phosphate + thymine. The catalysed reaction is uridine + phosphate = alpha-D-ribose 1-phosphate + uracil. The enzyme catalyses xanthosine + phosphate = alpha-D-ribose 1-phosphate + xanthine. In terms of biological role, catalyzes the phosphorolysis of diverse nucleosides, yielding D-ribose 1-phosphate and the respective free bases. Can use uridine, adenosine, guanosine, cytidine, thymidine, inosine and xanthosine as substrates. Also catalyzes the reverse reactions. The protein is Pyrimidine/purine nucleoside phosphorylase of Aromatoleum aromaticum (strain DSM 19018 / LMG 30748 / EbN1) (Azoarcus sp. (strain EbN1)).